The following is a 212-amino-acid chain: Peptide methionine sulfoxide reductase MsrA (212 aa).

The active site involves Cys52.

Belongs to the MsrA Met sulfoxide reductase family.

The enzyme catalyses L-methionyl-[protein] + [thioredoxin]-disulfide + H2O = L-methionyl-(S)-S-oxide-[protein] + [thioredoxin]-dithiol. It catalyses the reaction [thioredoxin]-disulfide + L-methionine + H2O = L-methionine (S)-S-oxide + [thioredoxin]-dithiol. In terms of biological role, has an important function as a repair enzyme for proteins that have been inactivated by oxidation. Catalyzes the reversible oxidation-reduction of methionine sulfoxide in proteins to methionine. The polypeptide is Peptide methionine sulfoxide reductase MsrA (Escherichia coli (strain ATCC 8739 / DSM 1576 / NBRC 3972 / NCIMB 8545 / WDCM 00012 / Crooks)).